The primary structure comprises 473 residues: Aspartyl/glutamyl-tRNA(Asn/Gln) amidotransferase subunit B (473 aa).

The protein belongs to the GatB/GatE family. GatB subfamily. As to quaternary structure, heterotrimer of A, B and C subunits.

The catalysed reaction is L-glutamyl-tRNA(Gln) + L-glutamine + ATP + H2O = L-glutaminyl-tRNA(Gln) + L-glutamate + ADP + phosphate + H(+). It catalyses the reaction L-aspartyl-tRNA(Asn) + L-glutamine + ATP + H2O = L-asparaginyl-tRNA(Asn) + L-glutamate + ADP + phosphate + 2 H(+). Allows the formation of correctly charged Asn-tRNA(Asn) or Gln-tRNA(Gln) through the transamidation of misacylated Asp-tRNA(Asn) or Glu-tRNA(Gln) in organisms which lack either or both of asparaginyl-tRNA or glutaminyl-tRNA synthetases. The reaction takes place in the presence of glutamine and ATP through an activated phospho-Asp-tRNA(Asn) or phospho-Glu-tRNA(Gln). The protein is Aspartyl/glutamyl-tRNA(Asn/Gln) amidotransferase subunit B of Campylobacter hominis (strain ATCC BAA-381 / DSM 21671 / CCUG 45161 / LMG 19568 / NCTC 13146 / CH001A).